Consider the following 388-residue polypeptide: Deoxyguanosinetriphosphate triphosphohydrolase-like protein (388 aa).

Residues His-24–Phe-44 are disordered. The HD domain occupies Arg-78–Asn-209.

It belongs to the dGTPase family. Type 2 subfamily.

The chain is Deoxyguanosinetriphosphate triphosphohydrolase-like protein from Ralstonia pickettii (strain 12J).